A 502-amino-acid polypeptide reads, in one-letter code: Lysine--tRNA ligase (502 aa).

The Mg(2+) site is built by E411 and E418.

It belongs to the class-II aminoacyl-tRNA synthetase family. As to quaternary structure, homodimer. Mg(2+) is required as a cofactor.

It localises to the cytoplasm. The catalysed reaction is tRNA(Lys) + L-lysine + ATP = L-lysyl-tRNA(Lys) + AMP + diphosphate. The protein is Lysine--tRNA ligase of Chromohalobacter salexigens (strain ATCC BAA-138 / DSM 3043 / CIP 106854 / NCIMB 13768 / 1H11).